Reading from the N-terminus, the 445-residue chain is Exodeoxyribonuclease 7 large subunit (445 aa).

Belongs to the XseA family. In terms of assembly, heterooligomer composed of large and small subunits.

The protein localises to the cytoplasm. The catalysed reaction is Exonucleolytic cleavage in either 5'- to 3'- or 3'- to 5'-direction to yield nucleoside 5'-phosphates.. In terms of biological role, bidirectionally degrades single-stranded DNA into large acid-insoluble oligonucleotides, which are then degraded further into small acid-soluble oligonucleotides. This is Exodeoxyribonuclease 7 large subunit from Staphylococcus saprophyticus subsp. saprophyticus (strain ATCC 15305 / DSM 20229 / NCIMB 8711 / NCTC 7292 / S-41).